Reading from the N-terminus, the 121-residue chain is Small ribosomal subunit protein uS13 (121 aa).

The interval K93–K121 is disordered.

The protein belongs to the universal ribosomal protein uS13 family. In terms of assembly, part of the 30S ribosomal subunit. Forms a loose heterodimer with protein S19. Forms two bridges to the 50S subunit in the 70S ribosome.

Its function is as follows. Located at the top of the head of the 30S subunit, it contacts several helices of the 16S rRNA. In the 70S ribosome it contacts the 23S rRNA (bridge B1a) and protein L5 of the 50S subunit (bridge B1b), connecting the 2 subunits; these bridges are implicated in subunit movement. Contacts the tRNAs in the A and P-sites. This chain is Small ribosomal subunit protein uS13, found in Clostridium perfringens (strain ATCC 13124 / DSM 756 / JCM 1290 / NCIMB 6125 / NCTC 8237 / Type A).